Consider the following 757-residue polypeptide: Polyribonucleotide nucleotidyltransferase (757 aa).

Asp487 and Asp493 together coordinate Mg(2+). Residues 554 to 613 (PRITTVRVKPDQIRLIIGPGGKTIKGIVDQTGVAIDVEDDGTVNVASADSDAVKRALDII) enclose the KH domain. The S1 motif domain occupies 623 to 691 (GATYKGTVKR…REGKIRLSRR (69 aa)). The disordered stretch occupies residues 697–757 (PEGEEGDRAR…PPRERRERRS (61 aa)). Basic and acidic residues-rich tracts occupy residues 702-711 (GDRARERMAQ) and 719-757 (PRRDGPGGRGGDRGGDRGSRPGLDRDRGGPPRERRERRS).

It belongs to the polyribonucleotide nucleotidyltransferase family. It depends on Mg(2+) as a cofactor.

The protein localises to the cytoplasm. The catalysed reaction is RNA(n+1) + phosphate = RNA(n) + a ribonucleoside 5'-diphosphate. In terms of biological role, involved in mRNA degradation. Catalyzes the phosphorolysis of single-stranded polyribonucleotides processively in the 3'- to 5'-direction. The sequence is that of Polyribonucleotide nucleotidyltransferase from Sorangium cellulosum (strain So ce56) (Polyangium cellulosum (strain So ce56)).